A 407-amino-acid polypeptide reads, in one-letter code: Probable acyl-CoA dehydrogenase FadE2 (407 aa).

This sequence belongs to the acyl-CoA dehydrogenase family. The cofactor is FAD.

The enzyme catalyses a 2,3-saturated acyl-CoA + A = a 2,3-dehydroacyl-CoA + AH2. In Mycobacterium tuberculosis (strain ATCC 25618 / H37Rv), this protein is Probable acyl-CoA dehydrogenase FadE2.